We begin with the raw amino-acid sequence, 350 residues long: Flap endonuclease 1 (350 aa).

Positions 1-102 (MGVTELGKLI…IEIEKRRRVR (102 aa)) are N-domain. D31, D84, E156, E158, D177, D179, and D241 together coordinate Mg(2+). Residues 120 to 263 (EARKYAQRAL…RALRLIQEYG (144 aa)) form an I-domain region.

It belongs to the XPG/RAD2 endonuclease family. FEN1 subfamily. Interacts with PCNA. PCNA stimulates the nuclease activity without altering cleavage specificity. It depends on Mg(2+) as a cofactor.

In terms of biological role, structure-specific nuclease with 5'-flap endonuclease and 5'-3' exonuclease activities involved in DNA replication and repair. During DNA replication, cleaves the 5'-overhanging flap structure that is generated by displacement synthesis when DNA polymerase encounters the 5'-end of a downstream Okazaki fragment. Binds the unpaired 3'-DNA end and kinks the DNA to facilitate 5' cleavage specificity. Cleaves one nucleotide into the double-stranded DNA from the junction in flap DNA, leaving a nick for ligation. Also involved in the base excision repair (BER) pathway. Acts as a genome stabilization factor that prevents flaps from equilibrating into structures that lead to duplications and deletions. Also possesses 5'-3' exonuclease activity on nicked or gapped double-stranded DNA. The polypeptide is Flap endonuclease 1 (Caldivirga maquilingensis (strain ATCC 700844 / DSM 13496 / JCM 10307 / IC-167)).